The primary structure comprises 187 residues: Elongation factor P (187 aa).

This sequence belongs to the elongation factor P family.

The protein resides in the cytoplasm. Its pathway is protein biosynthesis; polypeptide chain elongation. Functionally, involved in peptide bond synthesis. Stimulates efficient translation and peptide-bond synthesis on native or reconstituted 70S ribosomes in vitro. Probably functions indirectly by altering the affinity of the ribosome for aminoacyl-tRNA, thus increasing their reactivity as acceptors for peptidyl transferase. The chain is Elongation factor P from Clavibacter michiganensis subsp. michiganensis (strain NCPPB 382).